A 473-amino-acid polypeptide reads, in one-letter code: UDP-glycosyltransferase 71A27 (473 aa).

The active-site Proton acceptor is His-15. Residue His-15 participates in an anthocyanidin binding. The active-site Charge relay is the Asp-117. Positions 345, 347, 362, 365, 366, 367, and 370 each coordinate UDP-alpha-D-glucose. Gly-385 is a binding site for an anthocyanidin. The UDP-alpha-D-glucose site is built by Glu-386 and Gln-387.

This sequence belongs to the UDP-glycosyltransferase family.

It carries out the reaction (20S)-protopanaxadiol + UDP-alpha-D-glucose = (20S)-ginsenoside C-K + UDP + H(+). The protein operates within secondary metabolite biosynthesis; terpenoid biosynthesis. Functionally, component of the triterpene saponins (e.g. PPD-type ginsenosides or panaxosides) biosynthetic pathways. Glycosyltransferase that catalyzes the biosynthesis of compound K from protopanaxadiol (PPD). This Panax ginseng (Korean ginseng) protein is UDP-glycosyltransferase 71A27.